A 503-amino-acid polypeptide reads, in one-letter code: Cardiolipin synthase (503 aa).

3 helical membrane-spanning segments follow: residues 5–25 (LNVL…RSFW), 29–49 (IVGA…IVIF), and 59–79 (LTWL…YLMF). 2 PLD phosphodiesterase domains span residues 238-265 (INYR…GDEY) and 416-443 (TRGF…DMRS). Active-site residues include His-243, Lys-245, Asp-250, His-421, Lys-423, and Asp-428.

Belongs to the phospholipase D family. Cardiolipin synthase subfamily.

The protein localises to the cell membrane. It carries out the reaction 2 a 1,2-diacyl-sn-glycero-3-phospho-(1'-sn-glycerol) = a cardiolipin + glycerol. Catalyzes the reversible phosphatidyl group transfer from one phosphatidylglycerol molecule to another to form cardiolipin (CL) (diphosphatidylglycerol) and glycerol. The chain is Cardiolipin synthase (cls) from Halalkalibacterium halodurans (strain ATCC BAA-125 / DSM 18197 / FERM 7344 / JCM 9153 / C-125) (Bacillus halodurans).